Reading from the N-terminus, the 277-residue chain is Protein CUSTOS (277 aa).

Disordered regions lie at residues 1 to 81, 108 to 182, and 238 to 277; these read MVAP…QTTP, TQQA…QRCR, and SVNG…EPKN. Low complexity predominate over residues 9 to 18; the sequence is SDSESSSSDS. Serine 62 is subject to Phosphoserine. Residues 63–72 show a composition bias toward basic and acidic residues; sequence RRREVNQHDE. Threonine 80 is modified (phosphothreonine). A coiled-coil region spans residues 106 to 141; that stretch reads KKTQQARLQQEAKEQQEAKEQQAAKEEQAAKKEEDG. The segment covering 115-142 has biased composition (basic and acidic residues); sequence QEAKEQQEAKEQQAAKEEQAAKKEEDGF. 2 positions are modified to phosphoserine: serine 158 and serine 238. A compositionally biased stretch (basic residues) spans 248–258; that stretch reads TKKKKKKKAKK. A Nucleolar localization signal (NLS) motif is present at residues 249–256; sequence KKKKKKKA. The span at 265–277 shows a compositional bias: low complexity; sequence CPPAECAAAEPKN.

It belongs to the CUSTOS family.

It is found in the nucleus envelope. Functionally, plays a role in the regulation of Wnt signaling pathway during early development. This Rattus norvegicus (Rat) protein is Protein CUSTOS.